The primary structure comprises 400 residues: Argininosuccinate synthase (400 aa).

ATP is bound by residues 10–18 (AYSGGVDTS) and Ala38. Residue Tyr89 coordinates L-citrulline. Gly119 provides a ligand contact to ATP. Residues Thr121, Asn125, and Asp126 each coordinate L-aspartate. Asn125 contacts L-citrulline. 5 residues coordinate L-citrulline: Arg129, Ser177, Ser186, Glu262, and Tyr274.

Belongs to the argininosuccinate synthase family. Type 1 subfamily. In terms of assembly, homotetramer.

It is found in the cytoplasm. The catalysed reaction is L-citrulline + L-aspartate + ATP = 2-(N(omega)-L-arginino)succinate + AMP + diphosphate + H(+). It functions in the pathway amino-acid biosynthesis; L-arginine biosynthesis; L-arginine from L-ornithine and carbamoyl phosphate: step 2/3. In Prochlorococcus marinus (strain NATL2A), this protein is Argininosuccinate synthase.